A 361-amino-acid chain; its full sequence is Phospho-N-acetylmuramoyl-pentapeptide-transferase (361 aa).

The next 10 helical transmembrane spans lie at 27-47, 72-92, 99-119, 139-159, 169-189, 200-220, 240-260, 264-284, 289-309, and 338-358; these read GALF…ISLL, TPTM…LLWA, VWIT…DDYL, ALIA…GLAY, AIVN…VGAG, GLAI…AYLV, LAVV…FNAP, IFMG…VAVA, IVLA…IIQV, and QVVI…LATL.

This sequence belongs to the glycosyltransferase 4 family. MraY subfamily. Requires Mg(2+) as cofactor.

It is found in the cell inner membrane. It carries out the reaction UDP-N-acetyl-alpha-D-muramoyl-L-alanyl-gamma-D-glutamyl-meso-2,6-diaminopimeloyl-D-alanyl-D-alanine + di-trans,octa-cis-undecaprenyl phosphate = di-trans,octa-cis-undecaprenyl diphospho-N-acetyl-alpha-D-muramoyl-L-alanyl-D-glutamyl-meso-2,6-diaminopimeloyl-D-alanyl-D-alanine + UMP. It functions in the pathway cell wall biogenesis; peptidoglycan biosynthesis. In terms of biological role, catalyzes the initial step of the lipid cycle reactions in the biosynthesis of the cell wall peptidoglycan: transfers peptidoglycan precursor phospho-MurNAc-pentapeptide from UDP-MurNAc-pentapeptide onto the lipid carrier undecaprenyl phosphate, yielding undecaprenyl-pyrophosphoryl-MurNAc-pentapeptide, known as lipid I. The polypeptide is Phospho-N-acetylmuramoyl-pentapeptide-transferase (Methylobacterium nodulans (strain LMG 21967 / CNCM I-2342 / ORS 2060)).